Reading from the N-terminus, the 1012-residue chain is DNA polymerase gamma (1012 aa).

It belongs to the DNA polymerase type-A family. Requires Mg(2+) as cofactor.

Its subcellular location is the mitochondrion. It carries out the reaction DNA(n) + a 2'-deoxyribonucleoside 5'-triphosphate = DNA(n+1) + diphosphate. Its function is as follows. Involved in the replication of mitochondrial DNA. In Komagataella pastoris (Yeast), this protein is DNA polymerase gamma (MIP1).